A 213-amino-acid chain; its full sequence is Serine protease inhibitor 5 (213 aa).

The N-terminal stretch at 1–22 is a signal peptide; the sequence is MKCLFLLCLCLVPIVVFSSTFT. A propeptide spanning residues 23–28 is cleaved from the precursor; it reads SQNPIN. A Vacuolar targeting signal motif is present at residues 25-30; that stretch reads NPINLP. Disulfide bonds link cysteine 76–cysteine 125 and cysteine 174–cysteine 183.

The protein belongs to the protease inhibitor I3 (leguminous Kunitz-type inhibitor) family.

The protein localises to the vacuole. Functionally, inhibitor of trypsin (serine protease). Protects the plant by inhibiting proteases of invading organisms. The polypeptide is Serine protease inhibitor 5 (Solanum tuberosum (Potato)).